The primary structure comprises 594 residues: Chitooligosaccharidolytic beta-N-acetylglucosaminidase (594 aa).

The signal sequence occupies residues 1–22; sequence MWSRRIPLFIFGVLVLILSVAA. 2 disulfides stabilise this stretch: Cys31/Cys59 and Cys36/Cys55. N-linked (GlcNAc...) asparagine glycosylation is present at Asn164. Catalysis depends on charge relay system residues Asp249 and His303. Intrachain disulfides connect Cys316/Cys373 and Cys326/Cys331. Glu368 serves as the catalytic Charge relay system. An N-linked (GlcNAc...) asparagine glycan is attached at Asn375. Intrachain disulfides connect Cys478–Cys491 and Cys585–Cys592.

It belongs to the glycosyl hydrolase 20 family. In terms of assembly, homodimer.

The catalysed reaction is Hydrolysis of terminal non-reducing N-acetyl-D-hexosamine residues in N-acetyl-beta-D-hexosaminides.. Inhibited by O-(2-acetamido-2-deoxy-D-glucopyransylidene)-amino-N-phenylcarbamate (PUGNAc). Inhibited by thiabendazole (TMG)-chitotriomycin. Inhibited by 6-(dimethylamino)-2-(2-(((5-methyl-1,3,4-thiadiazol-2-yl)methyl)amino)ethyl)- 1H-benzo[de]isoquinoline-1,3(2H)-dione (Q2), a synthesized non-carbohydrate unsymmetrical dyad of naphthalimide and thiadiazole having a dimethylamino group at C4 of the naphthalimide. Inhibited poorly by N-acetyl-glucosamine (NAG)-thiazoline (NGT), but when the thiazoline ring of NGT is replaced by a bulky substituent such as in compound 1,2-dideoxy-2'-methylamino-alpha-D-glucopyranoso-[2,1-d]-Delta2'-thiazoline (NMAGT), the inhibition constant Ki is lowered 600-fold compared to that of NGT. Inhibited by berberine, berberine analogs thalifendine and palmatine, and berberine derivative SYSU-1, but not by berberine analog tetrahydroberberine. In terms of biological role, hydrolyzes one beta-GlcNAc unit at a time from the non-reducing ends of substrates, with a preference for shorter substrates. The 2-acetamido group and the beta-glycoside bond linkage in the substrate are required for its activity. Active with p-nitrophenyl (pNP)-beta-GlcNAc, pNP-beta-GalNAc and chitooligosaccharides (degree of polymerization from 2 to 6), but not with the complex N-glycan substrate (GlcNAcbeta-1,2Manalpha-1,6)(GlcNAcbeta-1,2Manalpha-1,3)Manbeta-1,4GlcNAcbeta-1,4GlcNAc-PA (GnGn-PA), pNP-alpha-GlcNAc or with the long polymer colloidal chitin. Involved in chitin catabolism. Involved in the degradation of old cuticle during the pupation stage. The protein is Chitooligosaccharidolytic beta-N-acetylglucosaminidase of Ostrinia furnacalis (Asian corn borer).